The sequence spans 207 residues: MPSTGLDKKPDSGATDLAALDTHLIAPPGVARRVFEQLRAPAEGAGFEIVRVRFGVQDGQTLQIMAERPDGSMTVEDCAELSRMLSALLDVEDPIPGEYHLEISSAGIDRPLTRPKDFERWSGFEVKVGLSEPLSGRKRFRGILQGVEDDEVLVECDIEGFSEPQVLGLPFRQLSEAKLVMSDDLIRESLKRQGPVNDDPDAPADGE.

Belongs to the RimP family.

It is found in the cytoplasm. Functionally, required for maturation of 30S ribosomal subunits. The sequence is that of Ribosome maturation factor RimP from Parvibaculum lavamentivorans (strain DS-1 / DSM 13023 / NCIMB 13966).